The following is a 371-amino-acid chain: Peptide chain release factor 2 (371 aa).

At Gln253 the chain carries N5-methylglutamine.

It belongs to the prokaryotic/mitochondrial release factor family. In terms of processing, methylated by PrmC. Methylation increases the termination efficiency of RF2.

Its subcellular location is the cytoplasm. In terms of biological role, peptide chain release factor 2 directs the termination of translation in response to the peptide chain termination codons UGA and UAA. This chain is Peptide chain release factor 2, found in Mycobacterium sp. (strain JLS).